The chain runs to 179 residues: Transcriptional regulator ICP22 homolog (179 aa).

A compositionally biased stretch (basic and acidic residues) spans 1-12 (MSRDRDRARPDT). Positions 1 to 40 (MSRDRDRARPDTRLSSSDNESDDEDYQLPHSHPEYGSDSS) are disordered.

It belongs to the herpesviridae ICP22 family.

The protein is Transcriptional regulator ICP22 homolog (MDV088) of Gallid herpesvirus 2 (strain Chicken/Md5/ATCC VR-987) (GaHV-2).